Here is a 206-residue protein sequence, read N- to C-terminus: Small ribosomal subunit protein uS4 (206 aa).

In terms of domain architecture, S4 RNA-binding spans 96–157; that stretch reads SRLDNVVYRM…KAKKQVRIQE (62 aa).

Belongs to the universal ribosomal protein uS4 family. In terms of assembly, part of the 30S ribosomal subunit. Contacts protein S5. The interaction surface between S4 and S5 is involved in control of translational fidelity.

Its function is as follows. One of the primary rRNA binding proteins, it binds directly to 16S rRNA where it nucleates assembly of the body of the 30S subunit. In terms of biological role, with S5 and S12 plays an important role in translational accuracy. This Neisseria gonorrhoeae (strain ATCC 700825 / FA 1090) protein is Small ribosomal subunit protein uS4.